Here is a 132-residue protein sequence, read N- to C-terminus: Agouti-signaling protein (132 aa).

The signal sequence occupies residues 1–22 (MDVTRLLLATLLVFLCFFTAYS). An N-linked (GlcNAc...) asparagine glycan is attached at asparagine 39. Residues 60–88 (KQISRKEAEKKRSSKKEASMKKVARPRTP) are disordered. The span at 63 to 79 (SRKEAEKKRSSKKEASM) shows a compositional bias: basic and acidic residues. 5 cysteine pairs are disulfide-bonded: cysteine 93–cysteine 108, cysteine 100–cysteine 114, cysteine 107–cysteine 125, cysteine 111–cysteine 132, and cysteine 116–cysteine 123. The 40-residue stretch at 93-132 (CVATRDSCKPPAPACCDPCASCQCRFFRSACSCRVLSLNC) folds into the Agouti domain.

It localises to the secreted. In terms of biological role, involved in the regulation of melanogenesis. The binding of ASP to MC1R precludes alpha-MSH initiated signaling and thus blocks production of cAMP, leading to a down-regulation of eumelanogenesis (brown/black pigment) and thus increasing synthesis of pheomelanin (yellow/red pigment). The polypeptide is Agouti-signaling protein (ASIP) (Macaca cyclopis (Taiwan macaque)).